A 384-amino-acid chain; its full sequence is FAD-dependent urate hydroxylase (384 aa).

FAD-binding positions include Gly-11, 30-31 (EA), Ser-43, and Val-125. Residues Asn-178, Arg-204, and 216 to 218 (YFF) contribute to the substrate site. FAD-binding positions include Asp-285 and 295–299 (GQGGC).

This sequence belongs to the FAD-dependent urate hydroxylase family. As to quaternary structure, monomer. Requires FAD as cofactor.

The enzyme catalyses urate + NADH + O2 + H(+) = 5-hydroxyisourate + NAD(+) + H2O. It participates in purine metabolism; urate degradation. Catalyzes the hydroxylation of urate to 5-hydroxyisourate (HIU). The sequence is that of FAD-dependent urate hydroxylase from Klebsiella pneumoniae subsp. pneumoniae (strain ATCC 700721 / MGH 78578).